The primary structure comprises 453 residues: Zinc finger CCCH domain-containing protein 26 (453 aa).

Over residues 1–15 (MSETQQQVQNSTGSI) the composition is skewed to polar residues. Residues 1–47 (MSETQQQVQNSTGSIRSPDKIEDTFRRMKVNEDNMEQSSPYPDRPGE) form a disordered region. Serine 2 carries the post-translational modification N-acetylserine. Basic and acidic residues predominate over residues 17–32 (SPDKIEDTFRRMKVNE). C3H1-type zinc fingers lie at residues 44-72 (RPGE…HPLT), 95-112 (ETGA…HPKD), 129-157 (RQGE…HPHP), 261-289 (FSER…HPKE), and 307-335 (RPGQ…HSML). Residues 360–379 (STNLRISSPPSPSDMTTLSN) are compositionally biased toward polar residues. Positions 360–453 (STNLRISSPP…KVQDSSDKST (94 aa)) are disordered. Residues 391-407 (ETEKQDDSPTEPEKSEV) show a composition bias toward basic and acidic residues. The segment covering 413 to 422 (PNGSDSTSLP) has biased composition (polar residues). Residues 441-453 (DSSKVQDSSDKST) show a composition bias toward basic and acidic residues.

The protein localises to the nucleus. This Arabidopsis thaliana (Mouse-ear cress) protein is Zinc finger CCCH domain-containing protein 26 (ZFN2).